A 315-amino-acid polypeptide reads, in one-letter code: Dihydroorotate dehydrogenase (fumarate) (315 aa).

Residues K46, 70–74, and N130 contribute to the substrate site; that span reads NSMGL. Position 46–47 (46–47) interacts with FMN; that stretch reads KS. N130 is a binding site for FMN. The Nucleophile role is filled by C133. Positions 167 and 195 each coordinate FMN. 196–197 is a substrate binding site; that stretch reads NS. Residues G224, 252–253, and 274–275 contribute to the FMN site; these read GG and GT.

This sequence belongs to the dihydroorotate dehydrogenase family. Type 1 subfamily. As to quaternary structure, homodimer. Requires FMN as cofactor.

Its subcellular location is the cytoplasm. It carries out the reaction (S)-dihydroorotate + fumarate = orotate + succinate. The protein operates within pyrimidine metabolism; UMP biosynthesis via de novo pathway. In terms of biological role, catalyzes the conversion of dihydroorotate to orotate with fumarate as the electron acceptor. The protein is Dihydroorotate dehydrogenase (fumarate) (URA1) of Kluyveromyces lactis (strain ATCC 8585 / CBS 2359 / DSM 70799 / NBRC 1267 / NRRL Y-1140 / WM37) (Yeast).